The primary structure comprises 66 residues: Small ribosomal subunit protein bS21 (66 aa).

It belongs to the bacterial ribosomal protein bS21 family.

This chain is Small ribosomal subunit protein bS21, found in Rickettsia typhi (strain ATCC VR-144 / Wilmington).